Here is a 792-residue protein sequence, read N- to C-terminus: Cadherin-11 (792 aa).

The signal sequence occupies residues 1 to 22 (MKEDNCLHAALICLGMLYYSHA). Positions 23-53 (ITTEKLNHVRPSLHGHHEKGKEGQVLHRSKR) are excised as a propeptide. 5 consecutive Cadherin domains span residues 54 to 159 (GWVW…PPEF), 160 to 268 (LHEN…PPKF), 269 to 383 (PQSV…PPVF), 384 to 486 (LKPS…DNAP), and 487 to 608 (KFAA…YILN). Topologically, residues 54 to 613 (GWVWNQFFVI…AYILNAGLST (560 aa)) are extracellular. Asn-455, Asn-536, and Asn-594 each carry an N-linked (GlcNAc...) asparagine glycan. The helical transmembrane segment at 614 to 634 (GALIAILACIVILLVIVVLFV) threads the bilayer. Topologically, residues 635–792 (TLKRQKKEPL…GSKDTFDDDS (158 aa)) are cytoplasmic.

The protein resides in the cell membrane. Functionally, cadherins are calcium-dependent cell adhesion proteins. They preferentially interact with themselves in a homophilic manner in connecting cells; cadherins may thus contribute to the sorting of heterogeneous cell types. Required for proper focal adhesion assembly. Involved in the regulation of cell migration. The polypeptide is Cadherin-11 (CDH11) (Gallus gallus (Chicken)).